Consider the following 248-residue polypeptide: Putative TrmH family tRNA/rRNA methyltransferase (248 aa).

S-adenosyl-L-methionine is bound by residues Gly-196, Ile-216, and Leu-225.

The protein belongs to the class IV-like SAM-binding methyltransferase superfamily. RNA methyltransferase TrmH family.

The polypeptide is Putative TrmH family tRNA/rRNA methyltransferase (Staphylococcus aureus (strain COL)).